Here is a 307-residue protein sequence, read N- to C-terminus: tRNA pseudouridine synthase B (307 aa).

Asp38 functions as the Nucleophile in the catalytic mechanism.

It belongs to the pseudouridine synthase TruB family. Type 1 subfamily.

The catalysed reaction is uridine(55) in tRNA = pseudouridine(55) in tRNA. Responsible for synthesis of pseudouridine from uracil-55 in the psi GC loop of transfer RNAs. This is tRNA pseudouridine synthase B from Bacillus cereus (strain ATCC 14579 / DSM 31 / CCUG 7414 / JCM 2152 / NBRC 15305 / NCIMB 9373 / NCTC 2599 / NRRL B-3711).